The chain runs to 212 residues: MIIKICGVRARDHALTAVDAGADMLGLVFAPSRRQITVEDAASIAEAARFAARGRGRAITLIGVFVNETVERIRDIASSCGLDGVQLSGDEPVIYADALAPLLVIKAVRFDDSAQERAWLIHDQAHVQLLVDARVPGNYGGAGVVADWERAAELARRRSLMLAGGLTPENVADAITRVRPWGVDVSSGVESNGVKDHGKIRAFIAAARAAAR.

Belongs to the TrpF family.

The enzyme catalyses N-(5-phospho-beta-D-ribosyl)anthranilate = 1-(2-carboxyphenylamino)-1-deoxy-D-ribulose 5-phosphate. The protein operates within amino-acid biosynthesis; L-tryptophan biosynthesis; L-tryptophan from chorismate: step 3/5. The sequence is that of N-(5'-phosphoribosyl)anthranilate isomerase from Roseiflexus castenholzii (strain DSM 13941 / HLO8).